The primary structure comprises 399 residues: Elongation factor Tu (399 aa).

The tr-type G domain occupies 10–204 (KPHVNIGTIG…AVDSSIPEPE (195 aa)). The segment at 19–26 (GHVDHGKT) is G1. Residue 19 to 26 (GHVDHGKT) coordinates GTP. Residue Thr-26 participates in Mg(2+) binding. Residues 60–64 (GITIN) form a G2 region. A G3 region spans residues 81–84 (DCPG). GTP is bound by residues 81–85 (DCPGH) and 136–139 (NKCD). Residues 136 to 139 (NKCD) are G4. The segment at 174–176 (SGL) is G5.

It belongs to the TRAFAC class translation factor GTPase superfamily. Classic translation factor GTPase family. EF-Tu/EF-1A subfamily. As to quaternary structure, monomer.

It is found in the cytoplasm. It catalyses the reaction GTP + H2O = GDP + phosphate + H(+). In terms of biological role, GTP hydrolase that promotes the GTP-dependent binding of aminoacyl-tRNA to the A-site of ribosomes during protein biosynthesis. The chain is Elongation factor Tu from Synechococcus sp. (strain CC9605).